Here is a 136-residue protein sequence, read N- to C-terminus: Small ribosomal subunit protein uS11c (136 aa).

This sequence belongs to the universal ribosomal protein uS11 family. In terms of assembly, part of the 30S ribosomal subunit.

Its subcellular location is the plastid. The polypeptide is Small ribosomal subunit protein uS11c (Epifagus virginiana (Beechdrops)).